A 149-amino-acid polypeptide reads, in one-letter code: 3-hydroxyacyl-[acyl-carrier-protein] dehydratase FabZ (149 aa).

His53 is a catalytic residue.

This sequence belongs to the thioester dehydratase family. FabZ subfamily.

The protein localises to the cytoplasm. It catalyses the reaction a (3R)-hydroxyacyl-[ACP] = a (2E)-enoyl-[ACP] + H2O. Functionally, involved in unsaturated fatty acids biosynthesis. Catalyzes the dehydration of short chain beta-hydroxyacyl-ACPs and long chain saturated and unsaturated beta-hydroxyacyl-ACPs. The chain is 3-hydroxyacyl-[acyl-carrier-protein] dehydratase FabZ from Neisseria meningitidis serogroup C / serotype 2a (strain ATCC 700532 / DSM 15464 / FAM18).